The chain runs to 224 residues: Cytidylate kinase (224 aa).

Residue 11–19 (GPAAAGKST) participates in ATP binding.

Belongs to the cytidylate kinase family. Type 1 subfamily.

It is found in the cytoplasm. The catalysed reaction is CMP + ATP = CDP + ADP. The enzyme catalyses dCMP + ATP = dCDP + ADP. In Listeria innocua serovar 6a (strain ATCC BAA-680 / CLIP 11262), this protein is Cytidylate kinase.